The chain runs to 153 residues: Salivary C-type lectin 1 (153 aa).

The N-terminal stretch at 1 to 19 is a signal peptide; it reads MIFSLYLIVAISLADLTAA. Positions 26 to 151 constitute a C-type lectin domain; that stretch reads KNRFCFPNVV…CSSTRRFVCE (126 aa). 2 cysteine pairs are disulfide-bonded: C45–C150 and C122–C142.

The cofactor is Ca(2+). Expressed in female salivary gland. Not detected or low-level expression in female midgut and fat body.

The protein localises to the secreted. Salivary protein with carbohydrate-binding activity; exibits high affinity for D-mannose. Agglutinates host erythrocytes. Probably participates in mosquito innate immune responses to prevent microorganism multiplication in sugar and blood meals. Its function is as follows. (Microbial infection) Agglutinates Staphylococcus aureus in vitro. In terms of biological role, (Microbial infection) Agglutinates Candida albicans in vitro. Functionally, (Microbial infection) Does not agglutinate Escherichia coli in vitro. The polypeptide is Salivary C-type lectin 1 (Aedes albopictus (Asian tiger mosquito)).